The chain runs to 457 residues: RuvB-like helicase 1 (457 aa).

72-79 is an ATP binding site; that stretch reads GAPGTGKT.

It belongs to the RuvB family. In terms of assembly, may form heterododecamers with RVB2. Component of the SWR1 chromatin remodeling complex, the INO80 chromatin remodeling complex, and of the R2TP complex.

It is found in the nucleus. The catalysed reaction is ATP + H2O = ADP + phosphate + H(+). In terms of biological role, DNA helicase which participates in several chromatin remodeling complexes, including the SWR1 and the INO80 complexes. The SWR1 complex mediates the ATP-dependent exchange of histone H2A for the H2A variant HZT1 leading to transcriptional regulation of selected genes by chromatin remodeling. The INO80 complex remodels chromatin by shifting nucleosomes and is involved in DNA repair. Also involved in pre-rRNA processing. In Debaryomyces hansenii (strain ATCC 36239 / CBS 767 / BCRC 21394 / JCM 1990 / NBRC 0083 / IGC 2968) (Yeast), this protein is RuvB-like helicase 1 (RBV1).